Consider the following 350-residue polypeptide: MILFYFMQTPLYYVHKHLKAKFTNFAGWTMPLQYTSIIEEVRAVRXRAGVFDISHMGRLLIEDPEKKLQYFTTNNLDKLSVGKVQYNLLPNEKGGIKDDVTVYMLSEIEFFLCVNAANRQKVINWLSPHLKLRDLSGELVQIALQGPKSEEIISKFYPVSDLKYYRFKVFDKTIISRTGYTGEDGFEIYVSPEEGKELFLELVKLAKPCGLGARDVLRIEAGLPLYGNELSEEITPIEVNLEKFVDFSKEFIGKEAMLKKKVKKKLFGLELTEKGIPRKGYRVFKGDREIGWISSGTYSPTLNKGIALCFVDIEERKEGNEVEIEVRGRRVRGVLRKYPFVRTPAGRYQK.

This sequence belongs to the GcvT family. As to quaternary structure, the glycine cleavage system is composed of four proteins: P, T, L and H.

The catalysed reaction is N(6)-[(R)-S(8)-aminomethyldihydrolipoyl]-L-lysyl-[protein] + (6S)-5,6,7,8-tetrahydrofolate = N(6)-[(R)-dihydrolipoyl]-L-lysyl-[protein] + (6R)-5,10-methylene-5,6,7,8-tetrahydrofolate + NH4(+). Functionally, the glycine cleavage system catalyzes the degradation of glycine. This is Aminomethyltransferase from Aquifex aeolicus (strain VF5).